The sequence spans 383 residues: Neuropeptide Y receptor type 1 (383 aa).

Residues 1–34 are Extracellular-facing; that stretch reads MNSTSFSQLENHSVHYNLSEEKPSFFAFENDDCH. Residues N2, N11, and N17 are each glycosylated (N-linked (GlcNAc...) asparagine). The chain crosses the membrane as a helical span at residues 35-55; that stretch reads LPLAVIFTLALAYGAVIILGV. The Cytoplasmic portion of the chain corresponds to 56 to 87; the sequence is SGNLALILIILKQKEMRNVTNILIVNLSFSDL. The helical transmembrane segment at 88–108 threads the bilayer; it reads LVAIMCLPFTFVYTLMDHWIF. At 109–116 the chain is on the extracellular side; the sequence is GEIMCKLN. C113 and C198 are disulfide-bonded. A helical membrane pass occupies residues 117-137; the sequence is PFVQCVSITVSIFSLVLIAVE. At 138–154 the chain is on the cytoplasmic side; sequence RHQLIINPRGWRPNNRH. A helical membrane pass occupies residues 155–175; sequence AYIGIAVIWVLAVASSLPFMI. Residues 176 to 211 lie on the Extracellular side of the membrane; sequence YQVLTDEPFQNVTLDAFKDKLVCFDQFPSDSHRLSY. A helical transmembrane segment spans residues 212–232; the sequence is TTLLLVLQYFGPLCFIFICYF. The Cytoplasmic portion of the chain corresponds to 233–260; that stretch reads KIYIRLKRRNNMMDKMRDSKYRSSESKR. The helical transmembrane segment at 261-281 threads the bilayer; sequence INIMLLSIVVAFAVCWLPLTI. Residues 282-299 lie on the Extracellular side of the membrane; it reads FNTVFDWNHQIIATCNHN. A helical transmembrane segment spans residues 300–320; the sequence is LLFLLCHLTAMISTCVNPIFY. The Cytoplasmic segment spans residues 321-383; it reads GFLNKNFQRD…KISCVENEKI (63 aa). C338 carries the S-palmitoyl cysteine lipid modification. Phosphoserine occurs at positions 368 and 376.

This sequence belongs to the G-protein coupled receptor 1 family.

The protein localises to the cell membrane. In terms of biological role, receptor for neuropeptide Y and peptide YY. The protein is Neuropeptide Y receptor type 1 (NPY1R) of Cavia porcellus (Guinea pig).